The following is a 186-amino-acid chain: GTP cyclohydrolase 1 1 (186 aa).

This sequence belongs to the GTP cyclohydrolase I family. As to quaternary structure, homomer.

The enzyme catalyses GTP + H2O = 7,8-dihydroneopterin 3'-triphosphate + formate + H(+). It participates in cofactor biosynthesis; 7,8-dihydroneopterin triphosphate biosynthesis; 7,8-dihydroneopterin triphosphate from GTP: step 1/1. This Pseudomonas aeruginosa (strain ATCC 15692 / DSM 22644 / CIP 104116 / JCM 14847 / LMG 12228 / 1C / PRS 101 / PAO1) protein is GTP cyclohydrolase 1 1 (folE1).